The following is a 415-amino-acid chain: Multidrug resistance protein MdtA (415 aa).

The signal sequence occupies residues 1 to 21 (MKGSYKSRWVIVIVVVIAAIA). 2 disordered regions span residues 32-59 (SRSAAPGATKQAQQSPAGGRRGMRSGPL) and 392-415 (EAQSATTSEEKATSREYAKKGARS). A compositionally biased stretch (basic and acidic residues) spans 399–415 (SEEKATSREYAKKGARS).

The protein belongs to the membrane fusion protein (MFP) (TC 8.A.1) family. As to quaternary structure, part of a tripartite efflux system composed of MdtA, MdtB and MdtC.

It localises to the cell inner membrane. The MdtABC tripartite complex confers resistance against novobiocin and deoxycholate. The chain is Multidrug resistance protein MdtA from Escherichia coli (strain SMS-3-5 / SECEC).